The chain runs to 194 residues: Large ribosomal subunit protein bL9 (194 aa).

The span at 166-184 (AENQAQADEQAGELAAAAA) shows a compositional bias: low complexity. The tract at residues 166-194 (AENQAQADEQAGELAAAAAERGDMGGDEE) is disordered. Basic and acidic residues predominate over residues 185-194 (ERGDMGGDEE).

The protein belongs to the bacterial ribosomal protein bL9 family.

Functionally, binds to the 23S rRNA. In Hyphomonas neptunium (strain ATCC 15444), this protein is Large ribosomal subunit protein bL9.